A 168-amino-acid chain; its full sequence is Protein GRIM REAPER (168 aa).

The signal sequence occupies residues 1–30 (MVIKIPNTFIKATSLLSLILYFLIIATSKS). The N-linked (GlcNAc...) asparagine glycan is linked to Asn-59.

This sequence belongs to the STIG1 family. Interacts with PRK5 and to a lower extent with PRK4. In terms of tissue distribution, highly expressed in flowers, and at very low levels in leaves.

The protein resides in the secreted. Its subcellular location is the extracellular space. It localises to the apoplast. Involved in the regulation of cell death induced by extracellular reactive oxygen species. Only the processed peptide, and not the full length GRI can bind in vivo to the extracellular domain of the receptor PRK5. The GRIp-induced cell death is superoxide and salicylic acid dependent. This is Protein GRIM REAPER from Arabidopsis thaliana (Mouse-ear cress).